A 265-amino-acid chain; its full sequence is Protein B8 (265 aa).

The sequence is that of Protein B8 (B8) from Homo sapiens (Human).